The primary structure comprises 551 residues: Arginine--tRNA ligase (551 aa).

The 'HIGH' region motif lies at 125 to 135 (ANPTGPLHIGH).

It belongs to the class-I aminoacyl-tRNA synthetase family. In terms of assembly, monomer.

The protein resides in the cytoplasm. The catalysed reaction is tRNA(Arg) + L-arginine + ATP = L-arginyl-tRNA(Arg) + AMP + diphosphate. In Nitratidesulfovibrio vulgaris (strain DP4) (Desulfovibrio vulgaris), this protein is Arginine--tRNA ligase.